We begin with the raw amino-acid sequence, 309 residues long: tRNA-cytidine(32) 2-sulfurtransferase (309 aa).

A PP-loop motif motif is present at residues 45–50; that stretch reads SGGKDS. 3 residues coordinate [4Fe-4S] cluster: Cys120, Cys123, and Cys211.

This sequence belongs to the TtcA family. Homodimer. It depends on Mg(2+) as a cofactor. Requires [4Fe-4S] cluster as cofactor.

It localises to the cytoplasm. It carries out the reaction cytidine(32) in tRNA + S-sulfanyl-L-cysteinyl-[cysteine desulfurase] + AH2 + ATP = 2-thiocytidine(32) in tRNA + L-cysteinyl-[cysteine desulfurase] + A + AMP + diphosphate + H(+). Its pathway is tRNA modification. Functionally, catalyzes the ATP-dependent 2-thiolation of cytidine in position 32 of tRNA, to form 2-thiocytidine (s(2)C32). The sulfur atoms are provided by the cysteine/cysteine desulfurase (IscS) system. The sequence is that of tRNA-cytidine(32) 2-sulfurtransferase from Psychromonas ingrahamii (strain DSM 17664 / CCUG 51855 / 37).